The primary structure comprises 373 residues: tRNA-specific 2-thiouridylase MnmA (373 aa).

ATP is bound by residues 12–19 (GMSGGVDS) and Met38. The segment at 98 to 100 (NPD) is interaction with target base in tRNA. Residue Cys103 is the Nucleophile of the active site. Cys103 and Cys200 form a disulfide bridge. ATP is bound at residue Gly127. Positions 150-152 (KDQ) are interaction with tRNA. Cys200 (cysteine persulfide intermediate) is an active-site residue. Positions 312 to 313 (RY) are interaction with tRNA.

The protein belongs to the MnmA/TRMU family.

The protein resides in the cytoplasm. It catalyses the reaction S-sulfanyl-L-cysteinyl-[protein] + uridine(34) in tRNA + AH2 + ATP = 2-thiouridine(34) in tRNA + L-cysteinyl-[protein] + A + AMP + diphosphate + H(+). In terms of biological role, catalyzes the 2-thiolation of uridine at the wobble position (U34) of tRNA, leading to the formation of s(2)U34. This is tRNA-specific 2-thiouridylase MnmA from Streptococcus pneumoniae (strain ATCC BAA-255 / R6).